The following is a 629-amino-acid chain: Embryonic polyadenylate-binding protein (629 aa).

RRM domains follow at residues 11 to 89 (ASLY…WSQR), 99 to 175 (GNVF…HFKS), 191 to 268 (TNVY…RAQK), and 294 to 370 (VNLY…LAQR). The PABC domain occupies 539-616 (QEPLTASSLA…AVAVLQAHQA (78 aa)).

Belongs to the polyadenylate-binding protein type-1 family. In terms of assembly, interacts with dazl in an RNA-independent manner. The C-terminus can self-associate and also interact with the C-terminus of pabpc1, independently of RNA. RRM 1 and RRM 2 interact with both eif4g1 and paip1, and the C-terminus also interacts with paip1. Prior to oocyte maturation, found in a complex with dazl and pum2 proteins and spdy1 mRNA; pum2 dissociates from the complex during maturation. Interacts with the translation termination factor sup35/erf3.

Its subcellular location is the cytoplasm. Functionally, binds and protects the poly(A) tail of mRNA with or without an AU-rich element (ARE) and prevents mRNA deadenylation. Stimulates the translation of mRNAs to which it is bound during early development. This Xenopus tropicalis (Western clawed frog) protein is Embryonic polyadenylate-binding protein.